A 92-amino-acid polypeptide reads, in one-letter code: Small nuclear ribonucleoprotein E (92 aa).

The region spanning 18–92 is the Sm domain; the sequence is INLIFRYLQN…NITLLQSVSN (75 aa).

It belongs to the snRNP Sm proteins family. Core component of the spliceosomal U1, U2, U4 and U5 small nuclear ribonucleoproteins (snRNPs), the building blocks of the spliceosome. Most spliceosomal snRNPs contain a common set of Sm proteins, snrpb, snrpd1, snrpd2, snrpd3, snrpe, snrpf and snrpg that assemble in a heptameric protein ring on the Sm site of the small nuclear RNA to form the core snRNP. Component of the U1 snRNP. The U1 snRNP is composed of the U1 snRNA and the 7 core Sm proteins snrpb, snrpd1, snrpd2, snrpd3, snrpe, snrpf and snrpg, and at least three U1 snRNP-specific proteins snrnp70/u1-70k, snrpa/u1-a and snrpc/u1-c. Component of the U4/U6-U5 tri-snRNP complex composed of the U4, U6 and U5 snRNAs and at least prpf3, prpf4, prpf6, prpf8, prpf31, snrnp200, txnl4a, snrnp40, snrpb, snrpd1, snrpd2, snrpd3, snrpe, snrpf, snrpg, ddx23, cd2bp2, ppih, snu13, eftud2, sart1 and usp39, plus lsm2, lsm3, lsm4, lsm5, lsm6, lsm7 and lsm8. Component of the U7 snRNP complex, or U7 Sm protein core complex, that is composed of the U7 snRNA and at least lsm10, lsm11, snrpb, snrpd3, snrpe, snrpf and snrpg; the complex does not contain snrpd1 and snrpd2. Component of the minor spliceosome, which splices U12-type introns. Part of the SMN-Sm complex that contains smn1, gemin2/sip1, ddx20/gemin3, gemin4, gemin5, gemin6, gemin7, gemin8, strap/unrip and the Sm proteins snrpb, snrpd1, snrpd2, snrpd3, snrpe, snrpf and snrpg; catalyzes core snRNPs assembly. Forms a 6S pICln-Sm complex composed of clns1a/pICln, snrpd1, snrpd2, snrpe, snrpf and snrpg; ring-like structure where clns1a/pICln mimics additional Sm proteins and which is unable to assemble into the core snRNP.

The protein localises to the cytoplasm. Its subcellular location is the cytosol. It localises to the nucleus. Its function is as follows. Plays a role in pre-mRNA splicing as a core component of the spliceosomal U1, U2, U4 and U5 small nuclear ribonucleoproteins (snRNPs), the building blocks of the spliceosome. Component of both the pre-catalytic spliceosome B complex and activated spliceosome C complexes. As a component of the minor spliceosome, involved in the splicing of U12-type introns in pre-mRNAs. As part of the U7 snRNP it is involved in histone 3'-end processing. The sequence is that of Small nuclear ribonucleoprotein E (snrpe) from Danio rerio (Zebrafish).